Here is a 279-residue protein sequence, read N- to C-terminus: Dehydrogenase/reductase SDR family member 4 (279 aa).

37–61 (LVTASTDGIGLAIARRLAQDGAHVV) lines the NADP(+) pocket. The residue at position 93 (K93) is an N6-acetyllysine; alternate. K93 bears the N6-succinyllysine; alternate mark. S170 contacts substrate. Y183 serves as the catalytic Proton acceptor. K187 lines the NADP(+) pocket. The residue at position 217 (K217) is an N6-acetyllysine; alternate. K217 is subject to N6-succinyllysine; alternate. S221 is subject to Phosphoserine. K228 and K235 each carry N6-succinyllysine. The Peroxisomal targeting signal motif lies at 277-279 (SRL).

It belongs to the short-chain dehydrogenases/reductases (SDR) family. In terms of assembly, homotetramer. As to expression, detected in heart, kidney, liver and small intestine. Detected at lower levels in brain, lung, stomach and spleen.

Its subcellular location is the peroxisome. It carries out the reaction a secondary alcohol + NADP(+) = a ketone + NADPH + H(+). The enzyme catalyses 3alpha-hydroxy-5beta-pregnan-20-one + NADP(+) = 5beta-pregnan-3,20-dione + NADPH + H(+). The catalysed reaction is 5beta-dihydrotestosterone + NADPH + H(+) = 5beta-androstane-3alpha,17beta-diol + NADP(+). It catalyses the reaction all-trans-retinol + NADP(+) = all-trans-retinal + NADPH + H(+). It carries out the reaction isatin + NADPH + H(+) = 3-hydroxyindolin-2-one + NADP(+). Its activity is regulated as follows. Inhibited by kaempferol, quercetin, genistein and myristic acid. Functionally, NADPH-dependent oxidoreductase which catalyzes the reduction of a variety of compounds bearing carbonyl groups including ketosteroids, alpha-dicarbonyl compounds, aldehydes, aromatic ketones and quinones. Reduces all-trans-retinal and 9-cis retinal. Reduces 3-ketosteroids and benzil into 3alpha-hydroxysteroids and S-benzoin, respectively, in contrast to the stereoselectivity of primates DHRS4s which produce 3beta-hydroxysteroids and R-benzoin. In the reverse reaction, catalyzes the NADP-dependent oxidation of 3alpha-hydroxysteroids and alcohol, but with much lower efficiency. Involved in the metabolism of 3alpha-hydroxysteroids, retinoid, isatin and xenobiotic carbonyl compounds. The chain is Dehydrogenase/reductase SDR family member 4 (DHRS4) from Sus scrofa (Pig).